We begin with the raw amino-acid sequence, 172 residues long: MKIYKDIITGDEMFSDTYKMKLVDEVIYEVTGRLVTRAQGDIQIEGFNPSAEEADEGTDSAVESGVDIVLNHRLVETYAFGDKKSYTLYLKDYMKKLVAKLEEKAPDQVEVFKTNMNKVMKDILGRFKELQFFTGESMDCDGMVAMMEYRDFDGTQIPIMMFFKHGLEEEKF.

The region spanning 1 to 172 (MKIYKDIITG…FKHGLEEEKF (172 aa)) is the TCTP domain.

It belongs to the TCTP family.

It is found in the cytoplasm. Functionally, involved in calcium binding and microtubule stabilization. This is Translationally-controlled tumor protein homolog (Tctp) from Bombyx mori (Silk moth).